Reading from the N-terminus, the 260-residue chain is DNA repair protein RecO (260 aa).

The protein belongs to the RecO family.

In terms of biological role, involved in DNA repair and RecF pathway recombination. The chain is DNA repair protein RecO from Levilactobacillus brevis (strain ATCC 367 / BCRC 12310 / CIP 105137 / JCM 1170 / LMG 11437 / NCIMB 947 / NCTC 947) (Lactobacillus brevis).